We begin with the raw amino-acid sequence, 93 residues long: Auxin-responsive protein SAUR26 (93 aa).

It belongs to the ARG7 family. Interacts with PP2C-D1. Higher expression in thermo-responsive cultivars (e.g. cv. Alst-1, cv. Ang-0 and cv. Com-0) than in low thermo-responsive cultivars (e.g. cv. Dja-1, cv. El-0 and cv. Kon).

The protein resides in the cell membrane. Provide a mechanistic link between auxin and plasma membrane H(+)-ATPases (PM H(+)-ATPases, e.g. AHA1 and AHA2), and triggers PM H(+)-ATPases activity by promoting phosphorylation of their C-terminal autoinhibitory domain as a result of PP2C-D subfamily of type 2C phosphatases inhibition, thus leading to the acidification of the apoplast and the facilitation of solutes and water uptake to drive cell expansion. Functions as a positive effectors of cell expansion through modulation of auxin transport. Involved in thermo-responsiveness of plant architecture. Enhances plasma membrane H(+)-ATPase. Probably involved in light intensity mediated root development. In Arabidopsis thaliana (Mouse-ear cress), this protein is Auxin-responsive protein SAUR26.